Here is a 426-residue protein sequence, read N- to C-terminus: Neuromedin-U receptor 1 (426 aa).

Over 1–65 (MTPLCLNCSV…QTELFMPICA (65 aa)) the chain is Extracellular. N-linked (GlcNAc...) asparagine glycosylation is found at Asn7, Asn27, and Asn41. The chain crosses the membrane as a helical span at residues 66 to 86 (TYLLIFVVGAVGNGLTCLVIL). Topologically, residues 87–97 (RHKAMRTPTNY) are cytoplasmic. The chain crosses the membrane as a helical span at residues 98 to 118 (YLFSLAVSDLLVLLVGLPLEL). Residues 119–138 (YEMWHNYPFLLGVGGCYFRT) are Extracellular-facing. A disulfide bridge connects residues Cys134 and Cys219. A helical transmembrane segment spans residues 139 to 161 (LLFEMVCLASVLNVTALSVERYV). Over 162–181 (AVVHPLQARSMVTRAHVRRV) the chain is Cytoplasmic. The helical transmembrane segment at 182–202 (LGAVWGLAMLCSLPNTSLHGI) threads the bilayer. Topologically, residues 203–235 (RQLHVPCRGPVPDSAVCMLVRPRALYNMVVQTT) are extracellular. The chain crosses the membrane as a helical span at residues 236–256 (ALLFFCLPMAIMSVLYLLIGL). The Cytoplasmic portion of the chain corresponds to 257-294 (RLRRERLLLMQEAKGRGSAAARSRYTCRLQQHDRGRRQ). The chain crosses the membrane as a helical span at residues 295–315 (VTKMLFVLVVVFGICWAPFHA). Topologically, residues 316 to 338 (DRVMWSVVSQWTDGLHLAFQHVH) are extracellular. A helical membrane pass occupies residues 339–359 (VISGIFFYLGSAANPVLYSLM). Topologically, residues 360 to 426 (SSRFRETFQE…PEAQQETDPS (67 aa)) are cytoplasmic.

This sequence belongs to the G-protein coupled receptor 1 family. As to expression, expressed in greatest abundance in peripheral organs, particularly in elements of the gastrointestinal and urogenital systems with highest levels in testes. In central nervous system structures express levels are much lower than those seen in peripheral organs. Within the CNS, has been detected in highest abundance in the cerebellum, dorsal root ganglia, hippocampus, and spinal cord.

The protein localises to the cell membrane. Functionally, receptor for the neuromedin-U and neuromedin-S neuropeptides. The protein is Neuromedin-U receptor 1 (NMUR1) of Homo sapiens (Human).